Here is a 298-residue protein sequence, read N- to C-terminus: Pantothenate synthetase (298 aa).

30–37 (MGNLHEGH) contacts ATP. Histidine 37 functions as the Proton donor in the catalytic mechanism. Glutamine 61 is a (R)-pantoate binding site. Beta-alanine is bound at residue glutamine 61. Position 149 to 152 (149 to 152 (GEKD)) interacts with ATP. Residue glutamine 155 coordinates (R)-pantoate. ATP contacts are provided by residues valine 178 and 186–189 (MSSR).

It belongs to the pantothenate synthetase family. Homodimer.

It is found in the cytoplasm. The catalysed reaction is (R)-pantoate + beta-alanine + ATP = (R)-pantothenate + AMP + diphosphate + H(+). Its pathway is cofactor biosynthesis; (R)-pantothenate biosynthesis; (R)-pantothenate from (R)-pantoate and beta-alanine: step 1/1. Its function is as follows. Catalyzes the condensation of pantoate with beta-alanine in an ATP-dependent reaction via a pantoyl-adenylate intermediate. This chain is Pantothenate synthetase, found in Aliivibrio salmonicida (strain LFI1238) (Vibrio salmonicida (strain LFI1238)).